Here is a 117-residue protein sequence, read N- to C-terminus: Large ribosomal subunit protein bL20 (117 aa).

It belongs to the bacterial ribosomal protein bL20 family.

Its function is as follows. Binds directly to 23S ribosomal RNA and is necessary for the in vitro assembly process of the 50S ribosomal subunit. It is not involved in the protein synthesizing functions of that subunit. This is Large ribosomal subunit protein bL20 from Finegoldia magna (strain ATCC 29328 / DSM 20472 / WAL 2508) (Peptostreptococcus magnus).